A 434-amino-acid chain; its full sequence is Eukaryotic peptide chain release factor subunit 1-1 (434 aa).

Belongs to the eukaryotic release factor 1 family. In terms of assembly, heterodimer of two subunits, one of which binds GTP.

It localises to the cytoplasm. Directs the termination of nascent peptide synthesis (translation) in response to the termination codons UAA, UAG and UGA. Modulates plant growth and development. This is Eukaryotic peptide chain release factor subunit 1-1 from Brassica oleracea var. botrytis (Cauliflower).